The primary structure comprises 31 residues: U1-theraphotoxin-Cv1a (31 aa).

3 cysteine pairs are disulfide-bonded: Cys2–Cys16, Cys9–Cys21, and Cys15–Cys28.

In terms of tissue distribution, expressed by the venom gland.

The protein localises to the secreted. Its function is as follows. Insecticidal toxin that induces reversible paralysis in crickets but not in cockroaches and mice. Molecular target unknown. This is U1-theraphotoxin-Cv1a from Coremiocnemis valida (Singapore tarantula).